Consider the following 122-residue polypeptide: Small ribosomal subunit protein uS13 (122 aa).

A disordered region spans residues 93–122 (RRGLPVRGQRTKTNARTRKGPKKTVAGKKK).

This sequence belongs to the universal ribosomal protein uS13 family. Part of the 30S ribosomal subunit. Forms a loose heterodimer with protein S19. Forms two bridges to the 50S subunit in the 70S ribosome.

Functionally, located at the top of the head of the 30S subunit, it contacts several helices of the 16S rRNA. In the 70S ribosome it contacts the 23S rRNA (bridge B1a) and protein L5 of the 50S subunit (bridge B1b), connecting the 2 subunits; these bridges are implicated in subunit movement. Contacts the tRNAs in the A and P-sites. The sequence is that of Small ribosomal subunit protein uS13 from Micrococcus luteus (strain ATCC 4698 / DSM 20030 / JCM 1464 / CCM 169 / CCUG 5858 / IAM 1056 / NBRC 3333 / NCIMB 9278 / NCTC 2665 / VKM Ac-2230) (Micrococcus lysodeikticus).